Here is a 335-residue protein sequence, read N- to C-terminus: Ketol-acid reductoisomerase (NADP(+)) (335 aa).

A KARI N-terminal Rossmann domain is found at 1 to 182 (MATIIYDDET…GATRAGVYET (182 aa)). NADP(+)-binding positions include 25-28 (YGSQ), R48, S51, S53, and 83-86 (DEKQ). H108 is a catalytic residue. G134 contributes to the NADP(+) binding site. The region spanning 183-328 (TFREETETDL…KQIRANIPWL (146 aa)) is the KARI C-terminal knotted domain. D191, E195, E227, and E231 together coordinate Mg(2+). A substrate-binding site is contributed by S252.

Belongs to the ketol-acid reductoisomerase family. Mg(2+) serves as cofactor.

It carries out the reaction (2R)-2,3-dihydroxy-3-methylbutanoate + NADP(+) = (2S)-2-acetolactate + NADPH + H(+). The enzyme catalyses (2R,3R)-2,3-dihydroxy-3-methylpentanoate + NADP(+) = (S)-2-ethyl-2-hydroxy-3-oxobutanoate + NADPH + H(+). The protein operates within amino-acid biosynthesis; L-isoleucine biosynthesis; L-isoleucine from 2-oxobutanoate: step 2/4. It participates in amino-acid biosynthesis; L-valine biosynthesis; L-valine from pyruvate: step 2/4. Its function is as follows. Involved in the biosynthesis of branched-chain amino acids (BCAA). Catalyzes an alkyl-migration followed by a ketol-acid reduction of (S)-2-acetolactate (S2AL) to yield (R)-2,3-dihydroxy-isovalerate. In the isomerase reaction, S2AL is rearranged via a Mg-dependent methyl migration to produce 3-hydroxy-3-methyl-2-ketobutyrate (HMKB). In the reductase reaction, this 2-ketoacid undergoes a metal-dependent reduction by NADPH to yield (R)-2,3-dihydroxy-isovalerate. The chain is Ketol-acid reductoisomerase (NADP(+)) from Methanosarcina mazei (strain ATCC BAA-159 / DSM 3647 / Goe1 / Go1 / JCM 11833 / OCM 88) (Methanosarcina frisia).